The chain runs to 262 residues: Small ribosomal subunit protein uS3 (262 aa).

The 69-residue stretch at valine 39–arginine 107 folds into the KH type-2 domain. The segment at asparagine 211–glutamate 262 is disordered. Residues glutamate 221–glycine 239 show a composition bias toward basic and acidic residues.

This sequence belongs to the universal ribosomal protein uS3 family. As to quaternary structure, part of the 30S ribosomal subunit. Forms a tight complex with proteins S10 and S14.

Functionally, binds the lower part of the 30S subunit head. Binds mRNA in the 70S ribosome, positioning it for translation. This Ralstonia pickettii (strain 12J) protein is Small ribosomal subunit protein uS3.